A 324-amino-acid chain; its full sequence is Glyceraldehyde-3-phosphate dehydrogenase 1 (324 aa).

NAD(+) is bound by residues 13-14, Asp-35, and Lys-85; that span reads RI. Residues 157–159, Thr-188, 217–218, and Arg-240 each bind D-glyceraldehyde 3-phosphate; these read SCT and TG. The active-site Nucleophile is Cys-158. Asn-322 lines the NAD(+) pocket.

The protein belongs to the glyceraldehyde-3-phosphate dehydrogenase family. Homotetramer.

It is found in the cytoplasm. It carries out the reaction D-glyceraldehyde 3-phosphate + phosphate + NAD(+) = (2R)-3-phospho-glyceroyl phosphate + NADH + H(+). The protein operates within carbohydrate degradation; glycolysis; pyruvate from D-glyceraldehyde 3-phosphate: step 1/5. The chain is Glyceraldehyde-3-phosphate dehydrogenase 1 (GPD-1) from Globodera rostochiensis (Golden nematode worm).